Reading from the N-terminus, the 230-residue chain is Pyridoxine/pyridoxamine 5'-phosphate oxidase (230 aa).

Substrate is bound by residues 21–24 (RVEY) and Lys-87. FMN-binding positions include 82–87 (RSVLCK), 97–98 (YT), Lys-104, and Gln-126. Residues Tyr-144, Arg-148, and Ser-152 each contribute to the substrate site. Residues 161 to 162 (QS) and Trp-207 each bind FMN. Residue 213–215 (RVH) coordinates substrate. Arg-217 contacts FMN.

The protein belongs to the pyridoxamine 5'-phosphate oxidase family. In terms of assembly, homodimer. It depends on FMN as a cofactor.

It carries out the reaction pyridoxamine 5'-phosphate + O2 + H2O = pyridoxal 5'-phosphate + H2O2 + NH4(+). The catalysed reaction is pyridoxine 5'-phosphate + O2 = pyridoxal 5'-phosphate + H2O2. Its pathway is cofactor metabolism; pyridoxal 5'-phosphate salvage; pyridoxal 5'-phosphate from pyridoxamine 5'-phosphate: step 1/1. It functions in the pathway cofactor metabolism; pyridoxal 5'-phosphate salvage; pyridoxal 5'-phosphate from pyridoxine 5'-phosphate: step 1/1. Its function is as follows. Catalyzes the oxidation of either pyridoxine 5'-phosphate (PNP) or pyridoxamine 5'-phosphate (PMP) into pyridoxal 5'-phosphate (PLP). This is Pyridoxine/pyridoxamine 5'-phosphate oxidase from Mycolicibacterium smegmatis (strain ATCC 700084 / mc(2)155) (Mycobacterium smegmatis).